The primary structure comprises 317 residues: Ventral anterior homeobox 1 (317 aa).

Residues 1–62 (MEVRYSQDSE…CEKSRASSGD (62 aa)) are disordered. The segment covering 18-27 (GLKEGKEGKD) has biased composition (basic and acidic residues). The segment at residues 92–151 (PKRTRTSFTAEQLYRLEMEFQRCQYVVGRERTELARQLNLSETQVKVWFQNRRTKQKKDQ) is a DNA-binding region (homeobox). Residues 203–248 (GPSLGITANGGSSSSSRSSAGSSGTAGGSPPLPTVTSSGTVTGLQG) are disordered. The span at 212-225 (GGSSSSSRSSAGSS) shows a compositional bias: low complexity. Residues 236–247 (TVTSSGTVTGLQ) are compositionally biased toward polar residues.

Belongs to the EMX homeobox family. In terms of tissue distribution, expressed in the anterior neural keel and later in the preoptic area and optic stalk.

It localises to the nucleus. Its function is as follows. Transcription factor that is required for closure of the choroid fissure and together with Vax2 is required for optic nerve differentiation and to limit retinal development to the optic cup. This chain is Ventral anterior homeobox 1 (vax1), found in Danio rerio (Zebrafish).